Reading from the N-terminus, the 358-residue chain is Trace amine-associated receptor 7e (358 aa).

The Extracellular segment spans residues 1–47 (MATDDASFPWDQDSILSRDLLSALSSQLCYENLNRSCIRSPYSPGPR). Asparagine 34 is a glycosylation site (N-linked (GlcNAc...) asparagine). Disulfide bonds link cysteine 37–cysteine 201 and cysteine 120–cysteine 205. Residues 48–68 (LILHAVFGFSAVLAVCGNLLV) form a helical membrane-spanning segment. Topologically, residues 69 to 83 (MTSILHFRQLHSPAN) are cytoplasmic. A helical transmembrane segment spans residues 84-104 (FLVASLACADLLVGLTVMPFS). Topologically, residues 105-121 (MVRSVEGCWYFGDIYCK) are extracellular. Residues 122 to 143 (FHSSFDVSFCYSSIFHLCFISV) traverse the membrane as a helical segment. At 144-166 (DRYIAVSDPLIYLTRFTASVSGK) the chain is on the cytoplasmic side. A helical membrane pass occupies residues 167-187 (CITFSWFLSIIYSFSLLYTGA). Residues 188–212 (SEAGLEDLVSALTCVGGCQLAVNQS) lie on the Extracellular side of the membrane. N-linked (GlcNAc...) asparagine glycosylation occurs at asparagine 210. A helical membrane pass occupies residues 213 to 233 (WVFINFLLFLVPTLVMMTVYS). At 234–274 (KVFLIAKQQAQNIEKIGKQTARASESYKDRVAKRERKAAKT) the chain is on the cytoplasmic side. The helical transmembrane segment at 275 to 295 (LGITVAAFLLSWLPYFIDSII) threads the bilayer. Topologically, residues 296-309 (DAFLGFITPTYVYE) are extracellular. A helical membrane pass occupies residues 310–333 (ILVWIAYYNSAMNPLIYAFFYPWF). The Cytoplasmic portion of the chain corresponds to 334 to 358 (RKAIKLIVTGKILRENSSATNLFPE).

This sequence belongs to the G-protein coupled receptor 1 family.

It localises to the cell membrane. Its function is as follows. Olfactory receptor specific for N,N-dimethylalkylamines trace amines. Trace amine compounds are enriched in animal body fluids and act on trace amine-associated receptors (TAARs) to elicit both intraspecific and interspecific innate behaviors. Ligand-binding causes a conformation change that triggers signaling via G(s)-class of G alpha proteins (GNAL or GNAS). The polypeptide is Trace amine-associated receptor 7e (Rattus norvegicus (Rat)).